Reading from the N-terminus, the 309-residue chain is Ribose-phosphate pyrophosphokinase (309 aa).

ATP-binding positions include 37–39 (DGE) and 96–97 (RQ). The Mg(2+) site is built by H130 and D169. The active site involves K192. Residues R194, D218, and 222–226 (DTAGT) each bind D-ribose 5-phosphate.

It belongs to the ribose-phosphate pyrophosphokinase family. Class I subfamily. In terms of assembly, homohexamer. It depends on Mg(2+) as a cofactor.

It is found in the cytoplasm. It carries out the reaction D-ribose 5-phosphate + ATP = 5-phospho-alpha-D-ribose 1-diphosphate + AMP + H(+). Its pathway is metabolic intermediate biosynthesis; 5-phospho-alpha-D-ribose 1-diphosphate biosynthesis; 5-phospho-alpha-D-ribose 1-diphosphate from D-ribose 5-phosphate (route I): step 1/1. In terms of biological role, involved in the biosynthesis of the central metabolite phospho-alpha-D-ribosyl-1-pyrophosphate (PRPP) via the transfer of pyrophosphoryl group from ATP to 1-hydroxyl of ribose-5-phosphate (Rib-5-P). This Helicobacter hepaticus (strain ATCC 51449 / 3B1) protein is Ribose-phosphate pyrophosphokinase.